A 136-amino-acid chain; its full sequence is Ribosome-binding factor A (136 aa).

Residues 116-136 (AGNHKASDEEESDDKGHEDEQ) form a disordered region.

The protein belongs to the RbfA family. Monomer. Binds 30S ribosomal subunits, but not 50S ribosomal subunits or 70S ribosomes.

Its subcellular location is the cytoplasm. Functionally, one of several proteins that assist in the late maturation steps of the functional core of the 30S ribosomal subunit. Associates with free 30S ribosomal subunits (but not with 30S subunits that are part of 70S ribosomes or polysomes). Required for efficient processing of 16S rRNA. May interact with the 5'-terminal helix region of 16S rRNA. The chain is Ribosome-binding factor A from Lachnoclostridium phytofermentans (strain ATCC 700394 / DSM 18823 / ISDg) (Clostridium phytofermentans).